The chain runs to 147 residues: Large ribosomal subunit protein uL11 (147 aa).

This sequence belongs to the universal ribosomal protein uL11 family. Part of the ribosomal stalk of the 50S ribosomal subunit. Interacts with L10 and the large rRNA to form the base of the stalk. L10 forms an elongated spine to which L12 dimers bind in a sequential fashion forming a multimeric L10(L12)X complex. One or more lysine residues are methylated.

In terms of biological role, forms part of the ribosomal stalk which helps the ribosome interact with GTP-bound translation factors. The polypeptide is Large ribosomal subunit protein uL11 (Bacteroides fragilis (strain ATCC 25285 / DSM 2151 / CCUG 4856 / JCM 11019 / LMG 10263 / NCTC 9343 / Onslow / VPI 2553 / EN-2)).